The chain runs to 129 residues: Thioredoxin H7 (129 aa).

The 124-residue stretch at 6–129 folds into the Thioredoxin domain; that stretch reads SSVHDVHSSM…LVKKIEQHRV (124 aa). Catalysis depends on nucleophile residues Cys55 and Cys58. Cys55 and Cys58 are joined by a disulfide.

Belongs to the thioredoxin family. Plant H-type subfamily.

It is found in the cytoplasm. In terms of biological role, probable thiol-disulfide oxidoreductase that may be involved in the redox regulation of a number of cytosolic enzymes. The polypeptide is Thioredoxin H7 (TRX7) (Arabidopsis thaliana (Mouse-ear cress)).